We begin with the raw amino-acid sequence, 449 residues long: Glycine--tRNA ligase (449 aa).

Residues R100 and E158 each contribute to the substrate site. Residues 190–192 (RNE), 200–205 (FRVREF), 275–276 (EL), and 319–322 (GIER) each bind ATP. 205–209 (FEQFE) contacts substrate. 315–319 (EPSVG) provides a ligand contact to substrate.

The protein belongs to the class-II aminoacyl-tRNA synthetase family. As to quaternary structure, homodimer.

Its subcellular location is the cytoplasm. The enzyme catalyses tRNA(Gly) + glycine + ATP = glycyl-tRNA(Gly) + AMP + diphosphate. Its function is as follows. Catalyzes the attachment of glycine to tRNA(Gly). The sequence is that of Glycine--tRNA ligase from Mycoplasma pneumoniae (strain ATCC 29342 / M129 / Subtype 1) (Mycoplasmoides pneumoniae).